The primary structure comprises 594 residues: Golgi-associated RAB2 interactor protein 4 (594 aa).

Residues 387 to 524 (MDAAAGPPVS…TSSGSSKGLG (138 aa)) are disordered. Residues 396-406 (STRQSKSSLSG) show a composition bias toward polar residues. 3 stretches are compositionally biased toward basic and acidic residues: residues 408-433 (HGRERTQASAEGCKEGRERREKDRAL), 442-455 (TGESRHKTRGDKIA), and 468-477 (ANRDDKKEKG). Residues 511–520 (SLWTTSSGSS) are compositionally biased toward polar residues.

The protein belongs to the GARIN family. As to quaternary structure, interacts (via N-terminus) with RAB2B (in GTP-bound form).

The protein resides in the golgi apparatus. In terms of biological role, RAB2B effector protein required for the compacted Golgi morphology, probably through interaction with small GTPase RAB2B. The chain is Golgi-associated RAB2 interactor protein 4 from Homo sapiens (Human).